A 364-amino-acid chain; its full sequence is Histidinol-phosphate aminotransferase (364 aa).

K222 carries the N6-(pyridoxal phosphate)lysine modification.

The protein belongs to the class-II pyridoxal-phosphate-dependent aminotransferase family. Histidinol-phosphate aminotransferase subfamily. Homodimer. Pyridoxal 5'-phosphate serves as cofactor.

The enzyme catalyses L-histidinol phosphate + 2-oxoglutarate = 3-(imidazol-4-yl)-2-oxopropyl phosphate + L-glutamate. It participates in amino-acid biosynthesis; L-histidine biosynthesis; L-histidine from 5-phospho-alpha-D-ribose 1-diphosphate: step 7/9. This is Histidinol-phosphate aminotransferase from Brevibacillus brevis (strain 47 / JCM 6285 / NBRC 100599).